Here is a 1127-residue protein sequence, read N- to C-terminus: Collagen alpha-2(I) chain (1127 aa).

Positions 1–16 (DGKPGLPGPAGPPGPP) are enriched in pro residues. The segment at 1 to 1017 (DGKPGLPGPA…GPAGPAGGGY (1017 aa)) is disordered. Low complexity-rich tracts occupy residues 171–191 (AGPAGPAGARGPAGPLGAAGP), 221–230 (EPGPNGAVGP), and 237–258 (PGNNGLNGAKGAAGTPGVAGAP). A compositionally biased stretch (pro residues) spans 260–270 (FPGPRGGPGPQ). Low complexity predominate over residues 272-282 (PQGAAGQRGLA). The span at 289–298 (GVKGDGGPKG) shows a compositional bias: gly residues. 4 stretches are compositionally biased toward low complexity: residues 326–345 (ATGPAGNRGARGAPGSRGMP), 355–398 (AAGP…AGPA), 436–449 (APGPDGNNGATGAT), and 461–473 (QGAAGAPGFQGLP). The segment covering 474–483 (GPAGGAGEAG) has biased composition (gly residues). Low complexity predominate over residues 508–518 (NPGAAGASGPQ). The span at 531 to 568 (GTDGGKGEPGAAGAAGGPGHQGPGGMPGERGAAGGPGG) shows a compositional bias: gly residues. The segment covering 569-580 (KGEKGEAGHRGP) has biased composition (basic and acidic residues). Composition is skewed to low complexity over residues 611-625 (SGSFGPAGPAGARGA) and 634-647 (PAGAPGFAGPPGAD). Positions 657–666 (GPSGGKGESG) are enriched in gly residues. Low complexity-rich tracts occupy residues 667–692 (PSGPAGPAGQSGPPGASGPAGPTGAR), 703–730 (FPGAAGRVGAAGPAGLVGPPGSAGPAGK), and 758–778 (SGEKGPSGEPGTPGTSGPLGL). Positions 792–801 (GSPGGAGAVG) are enriched in gly residues. Composition is skewed to low complexity over residues 802–824 (EAGRVGPAGPAGARGAPGNLGLP) and 860–872 (PGSSGAMGLAGAP). Gly residues predominate over residues 876-897 (GPSGGAGRPGNRGESGPGGAAG). Low complexity predominate over residues 898-913 (AVGPAGARGAAGPSGP). The segment covering 914 to 928 (RGEKGVAGEKGERGM) has biased composition (basic and acidic residues). 2 stretches are compositionally biased toward low complexity: residues 937–956 (LQGMPGPSGPSGDTGSAGPN) and 986–997 (PGARGPPGYVGP). Pro residues predominate over residues 998–1010 (AGPPGXPGLPGPA). The region spanning 1093–1127 (RTNKPSRLPLLDLAPLDLGGADQEFGLDLGPVCFK) is the Fibrillar collagen NC1 domain.

This sequence belongs to the fibrillar collagen family.

It localises to the secreted. It is found in the extracellular space. Its subcellular location is the extracellular matrix. This is Collagen alpha-2(I) chain from Epinephelus marginatus (Dusky grouper).